A 716-amino-acid chain; its full sequence is DNA ligase (716 aa).

NAD(+) is bound by residues 47–51 (DATYD), 96–97 (SL), and Glu-130. The active-site N6-AMP-lysine intermediate is Lys-132. NAD(+) contacts are provided by Arg-153, Glu-190, Lys-306, and Lys-330. Zn(2+) is bound by residues Cys-435, Cys-438, Cys-453, and Cys-459. One can recognise a BRCT domain in the interval 638–716 (RSDSAVAGKT…EDEWLKLIEG (79 aa)).

This sequence belongs to the NAD-dependent DNA ligase family. LigA subfamily. It depends on Mg(2+) as a cofactor. Mn(2+) is required as a cofactor.

The catalysed reaction is NAD(+) + (deoxyribonucleotide)n-3'-hydroxyl + 5'-phospho-(deoxyribonucleotide)m = (deoxyribonucleotide)n+m + AMP + beta-nicotinamide D-nucleotide.. Functionally, DNA ligase that catalyzes the formation of phosphodiester linkages between 5'-phosphoryl and 3'-hydroxyl groups in double-stranded DNA using NAD as a coenzyme and as the energy source for the reaction. It is essential for DNA replication and repair of damaged DNA. This chain is DNA ligase, found in Nitrobacter winogradskyi (strain ATCC 25391 / DSM 10237 / CIP 104748 / NCIMB 11846 / Nb-255).